The sequence spans 440 residues: Murein DD-endopeptidase MepM (440 aa).

Residues 21–40 (VMLGSLTVLTLAVAVWRPYV) traverse the membrane as a helical segment. In terms of domain architecture, LysM spans 96–141 (HEYVVSTGDTLSSILNQYGIDMGDITQLAAADKELRNLKIGQQLSW). Histidine 314 contacts Zn(2+).

The protein belongs to the peptidase M23B family. Zn(2+) serves as cofactor.

Its subcellular location is the cell membrane. It participates in cell wall biogenesis; cell wall polysaccharide biosynthesis. In terms of biological role, a murein DD-endopeptidase with specificity for D-Ala-meso-diaminopimelic acid (mDAP) cross-links. Its role is probably to cleave D-Ala-mDAP cross-links to allow insertion of new glycans and thus cell wall expansion. Functionally redundant with MepM and MepH. The polypeptide is Murein DD-endopeptidase MepM (mepM) (Escherichia coli O6:H1 (strain CFT073 / ATCC 700928 / UPEC)).